A 359-amino-acid polypeptide reads, in one-letter code: Probable S-adenosylmethionine-dependent methyltransferase At5g38100 (359 aa).

S-adenosyl-L-homocysteine is bound by residues tyrosine 19, cysteine 63, asparagine 68, aspartate 104, serine 133, and phenylalanine 134. Mg(2+) contacts are provided by asparagine 172, aspartate 258, and phenylalanine 260.

Belongs to the methyltransferase superfamily. Type-7 methyltransferase family. As to quaternary structure, homodimer. Mg(2+) serves as cofactor.

The chain is Probable S-adenosylmethionine-dependent methyltransferase At5g38100 from Arabidopsis thaliana (Mouse-ear cress).